The following is a 545-amino-acid chain: CTP synthase (545 aa).

Residues 1-266 (MITNYIFVTG…DQYICDKFNL (266 aa)) form an amidoligase domain region. Position 14 (Ser-14) interacts with CTP. Ser-14 provides a ligand contact to UTP. Residues 15-20 (SLGKGI) and Asp-72 each bind ATP. Residues Asp-72 and Glu-140 each contribute to the Mg(2+) site. CTP-binding positions include 147-149 (DIE), 187-192 (KTKPTQ), and Lys-223. Residues 187–192 (KTKPTQ) and Lys-223 each bind UTP. 239-241 (KDV) lines the ATP pocket. The region spanning 291 to 542 (SIGMVGKYIE…VKSALAHHQD (252 aa)) is the Glutamine amidotransferase type-1 domain. Gly-352 serves as a coordination point for L-glutamine. Cys-379 (nucleophile; for glutamine hydrolysis) is an active-site residue. Residues 380–383 (LGMQ), Glu-403, and Arg-470 contribute to the L-glutamine site. Catalysis depends on residues His-515 and Glu-517.

The protein belongs to the CTP synthase family. In terms of assembly, homotetramer.

The enzyme catalyses UTP + L-glutamine + ATP + H2O = CTP + L-glutamate + ADP + phosphate + 2 H(+). It carries out the reaction L-glutamine + H2O = L-glutamate + NH4(+). It catalyses the reaction UTP + NH4(+) + ATP = CTP + ADP + phosphate + 2 H(+). The protein operates within pyrimidine metabolism; CTP biosynthesis via de novo pathway; CTP from UDP: step 2/2. With respect to regulation, allosterically activated by GTP, when glutamine is the substrate; GTP has no effect on the reaction when ammonia is the substrate. The allosteric effector GTP functions by stabilizing the protein conformation that binds the tetrahedral intermediate(s) formed during glutamine hydrolysis. Inhibited by the product CTP, via allosteric rather than competitive inhibition. Its function is as follows. Catalyzes the ATP-dependent amination of UTP to CTP with either L-glutamine or ammonia as the source of nitrogen. Regulates intracellular CTP levels through interactions with the four ribonucleotide triphosphates. The protein is CTP synthase of Hamiltonella defensa subsp. Acyrthosiphon pisum (strain 5AT).